The primary structure comprises 474 residues: tRNA-2-methylthio-N(6)-dimethylallyladenosine synthase (474 aa).

Residues 3–120 (KKLHIKTWGC…LPEMINHVNG (118 aa)) form the MTTase N-terminal domain. Residues cysteine 12, cysteine 49, cysteine 83, cysteine 157, cysteine 161, and cysteine 164 each contribute to the [4Fe-4S] cluster site. The Radical SAM core domain maps to 143–375 (RAEGPTAFVS…QERITQQAMQ (233 aa)). The TRAM domain maps to 378 to 441 (RRMKGKVQRI…PNSLRGVLLR (64 aa)).

It belongs to the methylthiotransferase family. MiaB subfamily. As to quaternary structure, monomer. Requires [4Fe-4S] cluster as cofactor.

The protein localises to the cytoplasm. It catalyses the reaction N(6)-dimethylallyladenosine(37) in tRNA + (sulfur carrier)-SH + AH2 + 2 S-adenosyl-L-methionine = 2-methylsulfanyl-N(6)-dimethylallyladenosine(37) in tRNA + (sulfur carrier)-H + 5'-deoxyadenosine + L-methionine + A + S-adenosyl-L-homocysteine + 2 H(+). Functionally, catalyzes the methylthiolation of N6-(dimethylallyl)adenosine (i(6)A), leading to the formation of 2-methylthio-N6-(dimethylallyl)adenosine (ms(2)i(6)A) at position 37 in tRNAs that read codons beginning with uridine. The polypeptide is tRNA-2-methylthio-N(6)-dimethylallyladenosine synthase (Sodalis glossinidius (strain morsitans)).